Here is a 188-residue protein sequence, read N- to C-terminus: HTH-type transcriptional repressor AcnR (188 aa).

One can recognise an HTH tetR-type domain in the interval 10–70 (VNSRQEILEG…ALAREDAARM (61 aa)). A DNA-binding region (H-T-H motif) is located at residues 33–52 (TVRRLEEATGKSRGAIFHHF). Residues 79 to 80 (LV), Arg-130, and Asn-134 contribute to the citrate site. Glu-181 serves as a coordination point for Mg(2+). Citrate is bound at residue Arg-185.

As to quaternary structure, homodimer.

Its function is as follows. AcnR negatively controls the expression of the aconitase gene acn. This chain is HTH-type transcriptional repressor AcnR, found in Corynebacterium efficiens (strain DSM 44549 / YS-314 / AJ 12310 / JCM 11189 / NBRC 100395).